Consider the following 1061-residue polypeptide: MHLNRVLRETGVVVAAGLLYGSAAFAQSSTIIGTVIDAQSRQPAADVVVTATSPNLQGEQTVVTDAQGNYRIPQLPPGDYTLRFEKEQFKPYARSAIQLRLNRTIRVNVELLPEALGEVVEIVGAPPTIDVGSTTMGVNVDQEFIKRIAVARPGGKGGATRSFESLAELAPGAQNDNYGVSINGSTSPENGYVVDGLSTNDPAFGVNASPLSIEFVQDVNIITGGYMPEFGRSTGGVINAVTRSGSNEFHGSVFANWTPGTLEGTRKQIREEGTVITGQNQLQNLGDFGATLGGPILKDKLWFFAGFAPSFTRYQHTRTLNALRVDDEGNTIKDETDFTVADAIPGSARKYYADSRTIQYMGKLTYLINQDHNVSFALNGTPTSTGGLGKLSVNPQSGGLPGVLATRPGDFGLTETKANTTSLALKYAGAFADKKVLVDANLGWFHQTASTLPGDGSNLGDRTGLAGYSRMVYTTPRALTLFEALPEGQEGACGSTPEEQLVRSPVTGYGVGGPGFMSDQTLDRYQANAKATYLLNALGTHVFKAGVDVELLSFDQVKAYGGGVFFQEGSNYGVAGQGPAVHDARRYGYQTGPDSAVTQFTQVAKTTSTTVGGFLQDSWSIANRVTLNLGVRYDVQALYGGNGDLSLLLGNQWSPRIGAIVDPFANGRAKVFVNFARYYEQVPLNLMDRAFPGENRISARRSLAEPGQGTATSCDPSSFESQQATCNTDSNLLAIPESSRNVNRFYTGGTVGGTPVDPDIKAQSSDEIVVGAEYEVLANTRLGASYTHKDMNSVIEDMSRDDGNTYFLGNPGSGFAGEFPTPVRNYDNVTVYLNRTFADGWLAQANYTWSRLYGNYPGLFRPETGQLDPNILSDFDLIELLENRTGLLPFDRTHQIKVFGAKEFNISNALSASVGVSYRGSSGTPINYWGSHWAYLQDESFVLPRGAGGRTPWINTIDSNIGVNYRVSKDSVVSFTLDVFNLFNFQGVNTVDQTYTLRDIKPIPGGTPADLENLPGRVEFQDQAPRDEPFGSVDGDVNKNFKNPLSYQAPRQVRFGIRYTF.

The signal sequence occupies residues 1–26 (MHLNRVLRETGVVVAAGLLYGSAAFA). In terms of domain architecture, TBDR plug spans 121–243 (EIVGAPPTID…TGGVINAVTR (123 aa)). The 814-residue stretch at 248 to 1061 (EFHGSVFANW…QVRFGIRYTF (814 aa)) folds into the TBDR beta-barrel domain. The interval 701–722 (RSLAEPGQGTATSCDPSSFESQ) is disordered. Residues 709-722 (GTATSCDPSSFESQ) are compositionally biased toward polar residues.

Belongs to the TonB-dependent receptor family. As to quaternary structure, interacts with TonB. Part of a transport system composed of the outer membrane transporter Oar, the trans-periplasmic binding protein TonB and the inner membrane proteins ExbB and ExbD.

The protein resides in the cell outer membrane. Functionally, required for secretion of the protease PopC across the bacterial outer membrane. Binds and probably transports PopC from the periplasm to the extracellular milieu. It derives its energy for transport by interacting with the trans-periplasmic membrane protein TonB. Required for cellular adhesion during fruiting body formation, a multicellular developmental program that is induced in response to starvation. In Myxococcus xanthus, this protein is TonB-dependent transporter Oar.